Here is a 364-residue protein sequence, read N- to C-terminus: Dihydroorotate dehydrogenase (quinone) (364 aa).

FMN-binding positions include 61 to 65 (AGYDK) and Thr-85. Residue Lys-65 coordinates substrate. Substrate is bound at residue 110–114 (NRLGF). Residues Asn-139 and Asn-170 each coordinate FMN. Asn-170 contacts substrate. Residue Ser-173 is the Nucleophile of the active site. Asn-175 is a substrate binding site. Residues Lys-215 and Ser-243 each contribute to the FMN site. A substrate-binding site is contributed by 244-245 (NT). Residues Gly-266, Gly-295, and 316 to 317 (YT) each bind FMN.

The protein belongs to the dihydroorotate dehydrogenase family. Type 2 subfamily. Monomer. Requires FMN as cofactor.

The protein localises to the cell membrane. It catalyses the reaction (S)-dihydroorotate + a quinone = orotate + a quinol. It participates in pyrimidine metabolism; UMP biosynthesis via de novo pathway; orotate from (S)-dihydroorotate (quinone route): step 1/1. Functionally, catalyzes the conversion of dihydroorotate to orotate with quinone as electron acceptor. The chain is Dihydroorotate dehydrogenase (quinone) from Brucella canis (strain ATCC 23365 / NCTC 10854 / RM-666).